Reading from the N-terminus, the 478-residue chain is Cytochrome c-552 (478 aa).

The first 27 residues, 1–27 (MKKQWTRRSAAAIAMVTTLLLSSHSFA), serve as a signal peptide directing secretion. Heme c is bound at residue His91. Heme contacts are provided by Cys119, Cys122, and Lys123. Cys157, Cys160, His161, Cys206, Cys209, and His210 together coordinate heme c. Residues Glu212, Tyr213, Lys258, and Gln260 each contribute to the Ca(2+) site. Tyr213 lines the substrate pocket. Residue His261 participates in substrate binding. Heme c-binding residues include His272, Cys279, Cys282, His283, His298, Cys311, Cys314, His315, and His390.

Belongs to the cytochrome c-552 family. Ca(2+) is required as a cofactor. The cofactor is heme c.

The protein localises to the periplasm. It carries out the reaction 6 Fe(III)-[cytochrome c] + NH4(+) + 2 H2O = 6 Fe(II)-[cytochrome c] + nitrite + 8 H(+). The protein operates within nitrogen metabolism; nitrate reduction (assimilation). Catalyzes the reduction of nitrite to ammonia, consuming six electrons in the process. The protein is Cytochrome c-552 of Aliivibrio salmonicida (strain LFI1238) (Vibrio salmonicida (strain LFI1238)).